The following is a 339-amino-acid chain: Extracellular matrix protein-binding protein emp (339 aa).

The N-terminal stretch at 1 to 26 (MKKKLFVLTMSTLFATQLINSNHANA) is a signal peptide.

Its subcellular location is the cell surface. Functionally, adhesin that binds to the host cell extracellular matrix proteins fibronectin, fibrinogen, collagen, and vitronectin. This chain is Extracellular matrix protein-binding protein emp (emp), found in Staphylococcus aureus (strain bovine RF122 / ET3-1).